The chain runs to 962 residues: Vacuolar membrane protease (962 aa).

Topologically, residues 1-14 (MLAQFLRSLFRFRK) are cytoplasmic. A helical membrane pass occupies residues 15 to 35 (TTVSVLLVATYVVVFLLNVWD). Topologically, residues 36-359 (RIRYQYSLPE…FVTASTKDLF (324 aa)) are vacuolar. A glycan (N-linked (GlcNAc...) asparagine) is linked at Asn-118. Zn(2+) is bound by residues His-153 and Asp-165. Glu-197 (proton acceptor) is an active-site residue. Zn(2+) is bound by residues Glu-198, Glu-223, and His-297. A helical membrane pass occupies residues 360-380 (TLNCVVLSVIPVIILVLEFVI). Residues 381–390 (QRRKTRERNP) are Cytoplasmic-facing. The chain crosses the membrane as a helical span at residues 391 to 411 (LLVWLRLPFSMFISYLVTATF). Over 412-431 (RSSLFRVNPLIFSRDYVSPT) the chain is Vacuolar. Residues 432 to 452 (IGFSFTFLILNYLVLSLLEYL) traverse the membrane as a helical segment. Topologically, residues 453–460 (APSRDLKT) are cytoplasmic. A helical membrane pass occupies residues 461–481 (VSFVELFFGMWIALLWATIRL). The Vacuolar segment spans residues 482–489 (CTSKYTAT). A helical membrane pass occupies residues 490-510 (GVYPITVLYLLMSFGAIVGLV). Residues 511 to 601 (CSAFKRKHSV…VVSALNYDWS (91 aa)) are Cytoplasmic-facing. Residues 531-554 (APNTYSSIEESPQQATNTEAPNEN) show a composition bias toward polar residues. The tract at residues 531-563 (APNTYSSIEESPQQATNTEAPNENSPEEHDERA) is disordered. The chain crosses the membrane as a helical span at residues 602 to 622 (VQFLAVVPLASFFVIMCLSLI). Residues 623–639 (LDGIYQTCQEGFQATWN) are Vacuolar-facing. Asn-639 carries an N-linked (GlcNAc...) asparagine glycan. Residues 640–660 (VSKISMLGGMLLAIPVLPFCY) traverse the membrane as a helical segment. Position 661 (Lys-661) is a topological domain, cytoplasmic. A helical membrane pass occupies residues 662–682 (LNYFVSMVLLFAAASAGIFSF). Residues 683-962 (ERAPFTESSP…LVIVNDYIEL (280 aa)) lie on the Vacuolar side of the membrane. Residues Asn-812 and Asn-839 are each glycosylated (N-linked (GlcNAc...) asparagine).

The protein belongs to the peptidase M28 family. Requires Zn(2+) as cofactor.

It localises to the vacuole membrane. In terms of biological role, may be involved in vacuolar sorting and osmoregulation. The chain is Vacuolar membrane protease from Lachancea thermotolerans (strain ATCC 56472 / CBS 6340 / NRRL Y-8284) (Yeast).